We begin with the raw amino-acid sequence, 149 residues long: Endoribonuclease YbeY (149 aa).

The Zn(2+) site is built by H112, H116, and H122.

Belongs to the endoribonuclease YbeY family. The cofactor is Zn(2+).

It localises to the cytoplasm. Functionally, single strand-specific metallo-endoribonuclease involved in late-stage 70S ribosome quality control and in maturation of the 3' terminus of the 16S rRNA. The sequence is that of Endoribonuclease YbeY from Methylibium petroleiphilum (strain ATCC BAA-1232 / LMG 22953 / PM1).